We begin with the raw amino-acid sequence, 611 residues long: DNA mismatch repair protein MutL (611 aa).

It belongs to the DNA mismatch repair MutL/HexB family.

Its function is as follows. This protein is involved in the repair of mismatches in DNA. It is required for dam-dependent methyl-directed DNA mismatch repair. May act as a 'molecular matchmaker', a protein that promotes the formation of a stable complex between two or more DNA-binding proteins in an ATP-dependent manner without itself being part of a final effector complex. The protein is DNA mismatch repair protein MutL of Bartonella bacilliformis (strain ATCC 35685 / KC583 / Herrer 020/F12,63).